The sequence spans 846 residues: Protein kintoun (846 aa).

4 disordered regions span residues 1 to 21 (MSTA…ERAD), 372 to 416 (YLSR…PALT), 581 to 657 (HTSI…DSTI), and 743 to 846 (HDSS…DDEI). Ser378 carries the phosphoserine modification. Residues 389–403 (PVEDDADGDMPETPE) show a composition bias toward acidic residues. Composition is skewed to basic residues over residues 596–612 (LHKK…KKQR) and 750–766 (QRKK…RAQQ). Position 770 is a phosphoserine (Ser770). Residues 821–832 (TRQDHADADAKN) are compositionally biased toward basic and acidic residues.

The protein belongs to the PIH1 family. Kintoun subfamily. In terms of assembly, interacts with Pp1alpha-96A, Pp1-87B, Pp1-13C and flw.

The protein localises to the cytoplasm. Required for cytoplasmic pre-assembly of axonemal dyneins, thereby playing a central role in motility in cilia and flagella. Involved in pre-assembly of dynein arm complexes in the cytoplasm before intraflagellar transport loads them for the ciliary compartment. In Drosophila persimilis (Fruit fly), this protein is Protein kintoun.